A 594-amino-acid polypeptide reads, in one-letter code: Proteasome-associated ATPase (594 aa).

A coiled-coil region spans residues 20 to 98 (DDLAAQVTYL…KEEIDRLAQP (79 aa)). 282-287 (GCGKTL) serves as a coordination point for ATP. The segment at 593–594 (YL) is docks into pockets in the proteasome alpha-ring.

This sequence belongs to the AAA ATPase family. In terms of assembly, homohexamer. Assembles into a hexameric ring structure that caps the 20S proteasome core. Strongly interacts with the prokaryotic ubiquitin-like protein Pup through a hydrophobic interface; the interacting region of ARC lies in its N-terminal coiled-coil domain. There is one Pup binding site per ARC hexamer ring. Upon ATP-binding, the C-terminus of ARC interacts with the alpha-rings of the proteasome core, possibly by binding to the intersubunit pockets.

The protein operates within protein degradation; proteasomal Pup-dependent pathway. Functionally, ATPase which is responsible for recognizing, binding, unfolding and translocation of pupylated proteins into the bacterial 20S proteasome core particle. May be essential for opening the gate of the 20S proteasome via an interaction with its C-terminus, thereby allowing substrate entry and access to the site of proteolysis. Thus, the C-termini of the proteasomal ATPase may function like a 'key in a lock' to induce gate opening and therefore regulate proteolysis. This Catenulispora acidiphila (strain DSM 44928 / JCM 14897 / NBRC 102108 / NRRL B-24433 / ID139908) protein is Proteasome-associated ATPase.